The chain runs to 537 residues: Putative cysteine ligase BshC (537 aa).

The stretch at 417–457 (ASEQFLNELDQLEAQQKETYERLAAEVQGNEDNKNLVEKNN) forms a coiled coil.

The protein belongs to the BshC family.

Its function is as follows. Involved in bacillithiol (BSH) biosynthesis. May catalyze the last step of the pathway, the addition of cysteine to glucosamine malate (GlcN-Mal) to generate BSH. The polypeptide is Putative cysteine ligase BshC (Staphylococcus carnosus (strain TM300)).